Here is a 600-residue protein sequence, read N- to C-terminus: Albumin (600 aa).

Positions 1-10 (LLFLFSSAYS) are cleaved as a signal peptide. Positions 11–16 (RGVFRR) are excised as a propeptide. 3 consecutive Albumin domains span residues 11–202 (RGVF…DELR), 203–395 (DEGK…EFQP), and 396–593 (LVEE…KFVA). A Cu cation-binding site is contributed by histidine 19. Position 21 is a phosphoserine (serine 21). The Ca(2+) site is built by glutamate 22 and aspartate 29. Cysteine 69 and cysteine 78 are joined by a disulfide. Serine 74 and serine 81 each carry phosphoserine. A Zn(2+)-binding site is contributed by histidine 83. 6 cysteine pairs are disulfide-bonded: cysteine 91/cysteine 107, cysteine 106/cysteine 117, cysteine 140/cysteine 185, cysteine 184/cysteine 193, cysteine 216/cysteine 262, and cysteine 261/cysteine 269. Phosphothreonine is present on threonine 99. Position 221 is an N6-succinyllysine (lysine 221). Lysine 256 provides a ligand contact to (4Z,15Z)-bilirubin IXalpha. Ca(2+) is bound at residue glutamate 260. Zn(2+)-binding residues include histidine 263 and aspartate 265. Ca(2+)-binding residues include aspartate 265, glutamate 268, aspartate 271, and aspartate 275. Cystine bridges form between cysteine 281-cysteine 295, cysteine 294-cysteine 305, cysteine 332-cysteine 377, cysteine 376-cysteine 385, cysteine 408-cysteine 454, cysteine 453-cysteine 464, cysteine 477-cysteine 493, and cysteine 492-cysteine 503. Phosphoserine is present on serine 289. A Phosphoserine modification is found at serine 435. Residues threonine 436 and threonine 438 each carry the phosphothreonine modification. Lysine 452 bears the N6-succinyllysine mark. At serine 505 the chain carries Phosphoserine. Intrachain disulfides connect cysteine 530–cysteine 575 and cysteine 574–cysteine 583. Residue lysine 535 is modified to N6-succinyllysine. Residue lysine 550 is modified to N6-methyllysine. Lysine 580 carries the post-translational modification N6-succinyllysine.

It belongs to the ALB/AFP/VDB family. In terms of assembly, interacts with FCGRT; this interaction regulates ALB homeostasis. Interacts with TASOR. In plasma, occurs in a covalently-linked complex with chromophore-bound alpha-1-microglobulin; this interaction does not prevent fatty acid binding to ALB. Phosphorylated by FAM20C in the extracellular medium. Plasma.

It is found in the secreted. Functionally, binds water, Ca(2+), Na(+), K(+), fatty acids, hormones, bilirubin and drugs. Its main function is the regulation of the colloidal osmotic pressure of blood. Major zinc transporter in plasma, typically binds about 80% of all plasma zinc. Major calcium and magnesium transporter in plasma, binds approximately 45% of circulating calcium and magnesium in plasma. Potentially has more than two calcium-binding sites and might additionally bind calcium in a non-specific manner. The shared binding site between zinc and calcium at residue Asp-265 suggests a crosstalk between zinc and calcium transport in the blood. The rank order of affinity is zinc &gt; calcium &gt; magnesium. Binds to the bacterial siderophore enterobactin and inhibits enterobactin-mediated iron uptake of E.coli from ferric transferrin, and may thereby limit the utilization of iron and growth of enteric bacteria such as E.coli. Does not prevent iron uptake by the bacterial siderophore aerobactin. This Macaca mulatta (Rhesus macaque) protein is Albumin (ALB).